Consider the following 619-residue polypeptide: MAVVKVEFAISGKLVNKPRVDDWNPLAKFYYADEALNAVANELDSFDGRRDPERCSQLVNKLRQAQDRLLHIISEMIQQVFPRESDRACRDYRVKFPEEIMHDNLPGQLWFGAEANVIPVFGCTFSCLTAGSNIIDHEVESEAIRPMARALTKHLDTLRDLLKDQSLRDPTHYSDKVKRSLKHFDHLFAEFELNYVSAMVPVKSVREYDCQLDIAVLFSEALDRAVRLDYLTQDQIDDCDPIVMIAVPRLAIVCGLLYFPEGALNVDANPETLSNMFRSFHSLLVKIRDLLRILNLHELRRVEKALCTGETQVKFGEDSIVETLTVANFHLKTTGKGTGRILEAQNLQPNGSSSSNSSDGGDCDVSSASGSVCHTNTFAYKILSPIRLKDSSESSSIENSSKLDLLIMTHPPDPHRLRARFRSSADLIHRLFVCICGVADQLQTNYPTDLRRVLKMILQPNDVVPISGKTAPNPENEEEMGLEVQEALPLPSLIGVRWVPDSDCEQCTACSAQFTLVRRRHHCRNCGRIFCSRCSANSLPLPELGYDRKVRVCNLCFLYKINPFSPCTGQSNSSQNHSVIAFNSAVTSTAVVLNQVDHERSQDGSQSNESPTATTATTI.

Residues 501-561 (DSDCEQCTAC…VCNLCFLYKI (61 aa)) form an FYVE-type zinc finger. Cysteine 507, cysteine 510, cysteine 523, cysteine 526, cysteine 531, cysteine 534, cysteine 553, and cysteine 556 together coordinate Zn(2+). The disordered stretch occupies residues 598–619 (HERSQDGSQSNESPTATTATTI). Over residues 603–619 (DGSQSNESPTATTATTI) the composition is skewed to polar residues.

It belongs to the lst-2 family.

Functionally, negative regulator of epidermal growth factor receptor (EGFR) signaling. The chain is Lateral signaling target protein 2 homolog from Brugia malayi (Filarial nematode worm).